A 155-amino-acid chain; its full sequence is Protein archease-like (155 aa).

Ca(2+) is bound by residues Asp26, Asp154, and Ile155.

The protein belongs to the archease family.

Functionally, component of the tRNA-splicing ligase complex required to facilitate the enzymatic turnover of catalytic subunit RtcB (F16A11.2). The sequence is that of Protein archease-like from Caenorhabditis elegans.